A 78-amino-acid chain; its full sequence is Neurogranin (78 aa).

Position 1 is an N-acetylmethionine (Met-1). Positions 26 to 49 (ANAAAAKIQASFRGHMARKKIKSG) constitute an IQ domain. At Ser-36 the chain carries Phosphoserine; by PHK and PKC. A disordered region spans residues 38 to 78 (RGHMARKKIKSGERGRKGPGPGGPGGAGGARGGAGGGPSGD). One can recognise a Collagen-like domain in the interval 50–78 (ERGRKGPGPGGPGGAGGARGGAGGGPSGD). Positions 55-78 (GPGPGGPGGAGGARGGAGGGPSGD) are enriched in gly residues. Arg-68 carries the post-translational modification Citrulline; partial. Position 68 is an omega-N-methylarginine (Arg-68).

Belongs to the neurogranin family. The N-terminus is blocked. In terms of processing, phosphorylated at Ser-36 by PHK and PKC. Phosphorylation prevents interaction with Calmodulin and interrupts several learning- and memory-associated functions. As to expression, is highly enriched in brain. Accumulates postsynaptically in dendritic spines of neostriatal neurons.

Functionally, acts as a 'third messenger' substrate of protein kinase C-mediated molecular cascades during synaptic development and remodeling. Binds to calmodulin in the absence of calcium. The polypeptide is Neurogranin (NRGN) (Bos taurus (Bovine)).